Here is a 282-residue protein sequence, read N- to C-terminus: HTH-type transcriptional activator RhaR (282 aa).

The HTH araC/xylS-type domain maps to 179–277 (DKLITALANS…GMTPSQWRHL (99 aa)). 2 consecutive DNA-binding regions (H-T-H motif) follow at residues 196–217 (DAFC…RAQT) and 244–267 (ISEI…TRET).

As to quaternary structure, binds DNA as a dimer.

The protein localises to the cytoplasm. In terms of biological role, activates expression of the rhaSR operon in response to L-rhamnose. The protein is HTH-type transcriptional activator RhaR of Salmonella typhimurium (strain LT2 / SGSC1412 / ATCC 700720).